Consider the following 270-residue polypeptide: Sorting nexin-11 (270 aa).

In terms of domain architecture, PX spans V16–V132. Residues R59, K85, and R99 each coordinate a 1,2-diacyl-sn-glycero-3-phospho-(1D-myo-inositol-3-phosphate). The important for membrane trafficking stretch occupies residues I135–V139. The span at G168–Q177 shows a compositional bias: basic and acidic residues. Disordered regions lie at residues G168–S244 and L251–K270. The span at L218–S227 shows a compositional bias: pro residues.

The protein belongs to the sorting nexin family. In terms of assembly, monomer. Interacts with TRPV3; this interaction promotes TRPV3 trafficking from the cell membrane to lysosome for degradation.

Its subcellular location is the cell membrane. The protein resides in the endosome. It is found in the cytoplasm. Functionally, phosphoinositide-binding protein involved in protein sorting and membrane trafficking in endosomes. Regulates the levels of TRPV3 by promoting its trafficking from the cell membrane to lysosome for degradation. The protein is Sorting nexin-11 (SNX11) of Bos taurus (Bovine).